Reading from the N-terminus, the 453-residue chain is Allantoinase (453 aa).

Zn(2+) is bound by residues histidine 59, histidine 61, lysine 146, histidine 186, histidine 242, and aspartate 315. Lysine 146 bears the N6-carboxylysine mark.

It belongs to the metallo-dependent hydrolases superfamily. Allantoinase family. As to quaternary structure, homotetramer. The cofactor is Zn(2+). Carboxylation allows a single lysine to coordinate two zinc ions.

It catalyses the reaction (S)-allantoin + H2O = allantoate + H(+). It participates in nitrogen metabolism; (S)-allantoin degradation; allantoate from (S)-allantoin: step 1/1. Catalyzes the conversion of allantoin (5-ureidohydantoin) to allantoic acid by hydrolytic cleavage of the five-member hydantoin ring. The sequence is that of Allantoinase from Salmonella choleraesuis (strain SC-B67).